A 263-amino-acid chain; its full sequence is uncharacterized protein (263 aa).

Belongs to the flavoredoxin family. Requires FMN as cofactor.

This is an uncharacterized protein from Aeropyrum pernix (strain ATCC 700893 / DSM 11879 / JCM 9820 / NBRC 100138 / K1).